The sequence spans 227 residues: Phosphoribosylformylglycinamidine synthase subunit PurQ (227 aa).

A Glutamine amidotransferase type-1 domain is found at 3-227 (SSVITFPGSN…FFQNLINNLK (225 aa)). Cys-85 functions as the Nucleophile in the catalytic mechanism. Residues His-201 and Glu-203 contribute to the active site.

In terms of assembly, part of the FGAM synthase complex composed of 1 PurL, 1 PurQ and 2 PurS subunits.

The protein resides in the cytoplasm. It carries out the reaction N(2)-formyl-N(1)-(5-phospho-beta-D-ribosyl)glycinamide + L-glutamine + ATP + H2O = 2-formamido-N(1)-(5-O-phospho-beta-D-ribosyl)acetamidine + L-glutamate + ADP + phosphate + H(+). It catalyses the reaction L-glutamine + H2O = L-glutamate + NH4(+). It functions in the pathway purine metabolism; IMP biosynthesis via de novo pathway; 5-amino-1-(5-phospho-D-ribosyl)imidazole from N(2)-formyl-N(1)-(5-phospho-D-ribosyl)glycinamide: step 1/2. Functionally, part of the phosphoribosylformylglycinamidine synthase complex involved in the purines biosynthetic pathway. Catalyzes the ATP-dependent conversion of formylglycinamide ribonucleotide (FGAR) and glutamine to yield formylglycinamidine ribonucleotide (FGAM) and glutamate. The FGAM synthase complex is composed of three subunits. PurQ produces an ammonia molecule by converting glutamine to glutamate. PurL transfers the ammonia molecule to FGAR to form FGAM in an ATP-dependent manner. PurS interacts with PurQ and PurL and is thought to assist in the transfer of the ammonia molecule from PurQ to PurL. This Pelagibacter ubique (strain HTCC1062) protein is Phosphoribosylformylglycinamidine synthase subunit PurQ.